The primary structure comprises 321 residues: Lipoyl synthase (321 aa).

[4Fe-4S] cluster contacts are provided by Cys68, Cys73, Cys79, Cys94, Cys98, Cys101, and Ser308. The Radical SAM core domain occupies 80–297 (FNHGTATFMI…KALADELGFT (218 aa)).

Belongs to the radical SAM superfamily. Lipoyl synthase family. [4Fe-4S] cluster is required as a cofactor.

The protein localises to the cytoplasm. It catalyses the reaction [[Fe-S] cluster scaffold protein carrying a second [4Fe-4S](2+) cluster] + N(6)-octanoyl-L-lysyl-[protein] + 2 oxidized [2Fe-2S]-[ferredoxin] + 2 S-adenosyl-L-methionine + 4 H(+) = [[Fe-S] cluster scaffold protein] + N(6)-[(R)-dihydrolipoyl]-L-lysyl-[protein] + 4 Fe(3+) + 2 hydrogen sulfide + 2 5'-deoxyadenosine + 2 L-methionine + 2 reduced [2Fe-2S]-[ferredoxin]. It participates in protein modification; protein lipoylation via endogenous pathway; protein N(6)-(lipoyl)lysine from octanoyl-[acyl-carrier-protein]: step 2/2. In terms of biological role, catalyzes the radical-mediated insertion of two sulfur atoms into the C-6 and C-8 positions of the octanoyl moiety bound to the lipoyl domains of lipoate-dependent enzymes, thereby converting the octanoylated domains into lipoylated derivatives. The sequence is that of Lipoyl synthase from Shewanella baltica (strain OS223).